A 261-amino-acid chain; its full sequence is Taurine import ATP-binding protein TauB (261 aa).

An ABC transporter domain is found at 4–233 (LQLEGIGAHY…RYSAGESARA (230 aa)). 38–45 (GPSGSGKT) is an ATP binding site.

Belongs to the ABC transporter superfamily. Taurine importer (TC 3.A.1.17.1) family. In terms of assembly, the complex is composed of two ATP-binding proteins (TauB), two transmembrane proteins (TauC) and a solute-binding protein (TauA).

The protein localises to the cell inner membrane. The catalysed reaction is taurine(out) + ATP + H2O = taurine(in) + ADP + phosphate + H(+). Its function is as follows. Part of the ABC transporter complex TauABC involved in taurine import. Responsible for energy coupling to the transport system. This chain is Taurine import ATP-binding protein TauB, found in Pseudomonas syringae pv. tomato (strain ATCC BAA-871 / DC3000).